We begin with the raw amino-acid sequence, 251 residues long: Bidirectional sugar transporter SWEET4 (251 aa).

Over 1 to 12 (MVNATVARNIAG) the chain is Extracellular. Asn3 carries an N-linked (GlcNAc...) asparagine glycan. The MtN3/slv 1 domain occupies 12–96 (GICGNVISLF…LAIFFFFSPT (85 aa)). A helical membrane pass occupies residues 13 to 33 (ICGNVISLFLFLSPIPTFITI). The Cytoplasmic portion of the chain corresponds to 34–45 (YKKKKVEEYKAD). Residues 46–66 (PYLATVLNCALWVFYGLPMVQ) traverse the membrane as a helical segment. Residues 67–72 (PDSLLV) are Extracellular-facing. The chain crosses the membrane as a helical span at residues 73 to 93 (ITINGTGLAIELVYLAIFFFF). Residues 94 to 103 (SPTSRKVKVG) are Cytoplasmic-facing. A helical membrane pass occupies residues 104 to 124 (LWLIGEMVFVGIVATCTLLLF). Residues 125–132 (HTHNQRSS) lie on the Extracellular side of the membrane. The chain crosses the membrane as a helical span at residues 133-153 (FVGIFCVIFVSLMYIAPLTIM). The MtN3/slv 2 domain occupies 133–216 (FVGIFCVIFV…LILYACYYKT (84 aa)). Residues 154–163 (SKVIKTKSVK) are Cytoplasmic-facing. The chain crosses the membrane as a helical span at residues 164 to 186 (YMPFSLSLANFLNGVVWVIYALI). The Extracellular segment spans residues 187-190 (KFDL). Residues 191-213 (FILIGNGLGTVSGAVQLILYACY) traverse the membrane as a helical segment. Residues 214–251 (YKTTPKDDEDEEDEENLSKVNSQLQLSGNSGQAKRVSA) lie on the Cytoplasmic side of the membrane. The disordered stretch occupies residues 220-251 (DDEDEEDEENLSKVNSQLQLSGNSGQAKRVSA). Residues 231-245 (SKVNSQLQLSGNSGQ) show a composition bias toward polar residues.

Belongs to the SWEET sugar transporter family. In terms of assembly, forms homooligomers and heterooligomers with SWEET8 and SWEET17.

It localises to the cell membrane. Its function is as follows. Mediates both low-affinity uptake and efflux of sugar across the plasma membrane. In Arabidopsis thaliana (Mouse-ear cress), this protein is Bidirectional sugar transporter SWEET4.